The chain runs to 202 residues: MPIGVPKVLFGSPGEEDAAWVDIYNRLHRERLLFLGQELDSEISNQLVGLMVYLSIEDKTRDFFLFINSPGGWVIPGIGLYDTMQFVPPDVHTICMGLAASMGSFILVGGEITKRLAFPHARVMIHQPASSFYEAQAGEFVLEAEELLKLRETLTRVYVQRTGKPLWVVSEDMERDVFLSATEAQAHGIVDLVGDENMGDLV.

The active-site Nucleophile is the serine 101. Residue histidine 126 is part of the active site.

It belongs to the peptidase S14 family. Component of the chloroplastic Clp protease core complex.

It is found in the plastid. The protein localises to the chloroplast stroma. It catalyses the reaction Hydrolysis of proteins to small peptides in the presence of ATP and magnesium. alpha-casein is the usual test substrate. In the absence of ATP, only oligopeptides shorter than five residues are hydrolyzed (such as succinyl-Leu-Tyr-|-NHMec, and Leu-Tyr-Leu-|-Tyr-Trp, in which cleavage of the -Tyr-|-Leu- and -Tyr-|-Trp bonds also occurs).. In terms of biological role, cleaves peptides in various proteins in a process that requires ATP hydrolysis. Has a chymotrypsin-like activity. Plays a major role in the degradation of misfolded proteins. The protein is ATP-dependent Clp protease proteolytic subunit of Acorus gramineus (Dwarf sweet flag).